We begin with the raw amino-acid sequence, 409 residues long: Arginine biosynthesis bifunctional protein ArgJ (409 aa).

6 residues coordinate substrate: Thr165, Lys191, Thr202, Glu282, Asn404, and Thr409. Thr202 serves as the catalytic Nucleophile.

Belongs to the ArgJ family. In terms of assembly, heterotetramer of two alpha and two beta chains.

The protein resides in the cytoplasm. The catalysed reaction is N(2)-acetyl-L-ornithine + L-glutamate = N-acetyl-L-glutamate + L-ornithine. It carries out the reaction L-glutamate + acetyl-CoA = N-acetyl-L-glutamate + CoA + H(+). The protein operates within amino-acid biosynthesis; L-arginine biosynthesis; L-ornithine and N-acetyl-L-glutamate from L-glutamate and N(2)-acetyl-L-ornithine (cyclic): step 1/1. Its pathway is amino-acid biosynthesis; L-arginine biosynthesis; N(2)-acetyl-L-ornithine from L-glutamate: step 1/4. Catalyzes two activities which are involved in the cyclic version of arginine biosynthesis: the synthesis of N-acetylglutamate from glutamate and acetyl-CoA as the acetyl donor, and of ornithine by transacetylation between N(2)-acetylornithine and glutamate. The sequence is that of Arginine biosynthesis bifunctional protein ArgJ from Parasynechococcus marenigrum (strain WH8102).